The sequence spans 214 residues: Reticulon-3-A (214 aa).

Positions M1–G21 are disordered. Residues V26 to E214 form the Reticulon domain. The next 2 membrane-spanning stretches (helical) occupy residues M46 to L66 and V155 to V175.

As to quaternary structure, homodimer. As to expression, expressed in the animal hemisphere at the four-cell stage. During gastrulation, expression becomes restricted to the prospective neuroectoderm. At the early tail bud stage, expressed in the head structure. At the tadpole stage, expressed in head and neural tissues including the otic vesicle and optic nerve.

The protein resides in the endoplasmic reticulum membrane. The protein localises to the golgi apparatus membrane. In terms of biological role, may be involved in membrane trafficking in the early secretory pathway. This is Reticulon-3-A (rtn3-a) from Xenopus laevis (African clawed frog).